The following is a 511-amino-acid chain: Maturase K (511 aa).

Belongs to the intron maturase 2 family. MatK subfamily.

It is found in the plastid. Its subcellular location is the chloroplast. In terms of biological role, usually encoded in the trnK tRNA gene intron. Probably assists in splicing its own and other chloroplast group II introns. The polypeptide is Maturase K (Pistia stratiotes (Water lettuce)).